Reading from the N-terminus, the 193-residue chain is dCTP deaminase (193 aa).

Residues 110 to 115 (RSSLAR), aspartate 128, 136 to 138 (VLE), tyrosine 171, lysine 178, and glutamine 182 contribute to the dCTP site. Glutamate 138 acts as the Proton donor/acceptor in catalysis. The tract at residues 169 to 193 (RPYNRRQDAKYRDQQGAVASRIDKD) is disordered.

It belongs to the dCTP deaminase family. In terms of assembly, homotrimer.

It carries out the reaction dCTP + H2O + H(+) = dUTP + NH4(+). It functions in the pathway pyrimidine metabolism; dUMP biosynthesis; dUMP from dCTP (dUTP route): step 1/2. In terms of biological role, catalyzes the deamination of dCTP to dUTP. The polypeptide is dCTP deaminase (Salmonella arizonae (strain ATCC BAA-731 / CDC346-86 / RSK2980)).